The chain runs to 639 residues: Threonine--tRNA ligase (639 aa).

In terms of domain architecture, TGS spans M1–T61. Residues D242–P533 form a catalytic region. Zn(2+) is bound by residues C333, H384, and H510.

Belongs to the class-II aminoacyl-tRNA synthetase family. Homodimer. It depends on Zn(2+) as a cofactor.

It is found in the cytoplasm. It catalyses the reaction tRNA(Thr) + L-threonine + ATP = L-threonyl-tRNA(Thr) + AMP + diphosphate + H(+). Catalyzes the attachment of threonine to tRNA(Thr) in a two-step reaction: L-threonine is first activated by ATP to form Thr-AMP and then transferred to the acceptor end of tRNA(Thr). Also edits incorrectly charged L-seryl-tRNA(Thr). This is Threonine--tRNA ligase from Acidovorax sp. (strain JS42).